We begin with the raw amino-acid sequence, 218 residues long: Glutathione S-transferase Mu 2 (218 aa).

A GST N-terminal domain is found at 2–88; that stretch reads PMTLGYWNIR…YIARKHNLCG (87 aa). 7–8 is a binding site for glutathione; the sequence is YW. Phosphoserine is present on residues S27 and S44. Glutathione is bound by residues 43 to 46, K50, 59 to 60, and 72 to 73; these read RSQW, NL, and QS. The region spanning 90-208 is the GST C-terminal domain; that stretch reads SEKEQIREDI…KSSRFLPRPV (119 aa). Substrate is bound at residue Y116.

The protein belongs to the GST superfamily. Mu family. In terms of assembly, homodimer. Muscle.

It is found in the cytoplasm. It catalyses the reaction RX + glutathione = an S-substituted glutathione + a halide anion + H(+). The catalysed reaction is 11(S)-hydroxy-14(S),15(S)-epoxy-(5Z,8Z,12E)-eicosatrienoate + glutathione = (11S,15S)-dihydroxy-14(R)-S-glutathionyl-(5Z,8Z,12E)-eicosatrienoate. Conjugation of reduced glutathione to a wide number of exogenous and endogenous hydrophobic electrophiles. Participates in the formation of novel hepoxilin regioisomers. This is Glutathione S-transferase Mu 2 from Homo sapiens (Human).